The primary structure comprises 361 residues: Peptide chain release factor 1 (361 aa).

Gln236 carries the N5-methylglutamine modification. Positions 285–309 (TAKDSARAADRKAQVGSGDRSERIR) are enriched in basic and acidic residues. Residues 285–311 (TAKDSARAADRKAQVGSGDRSERIRTY) form a disordered region.

This sequence belongs to the prokaryotic/mitochondrial release factor family. Post-translationally, methylated by PrmC. Methylation increases the termination efficiency of RF1.

The protein localises to the cytoplasm. Functionally, peptide chain release factor 1 directs the termination of translation in response to the peptide chain termination codons UAG and UAA. This Methylorubrum extorquens (strain CM4 / NCIMB 13688) (Methylobacterium extorquens) protein is Peptide chain release factor 1.